The primary structure comprises 589 residues: Ubiquilin-1 (589 aa).

The span at 1–11 (MAESGESGGPP) shows a compositional bias: gly residues. Disordered stretches follow at residues 1–35 (MAES…AEPK) and 110–145 (NRPQ…ATSN). Position 2 is an N-acetylalanine (A2). Low complexity predominate over residues 12 to 35 (GSQDSAAGAEGAGAPAAAASAEPK). The region spanning 37–111 (MKVTVKTPKE…VHLVIKTQNR (75 aa)) is the Ubiquitin-like domain. Polar residues predominate over residues 110–124 (NRPQDHSAQQTNTAG). Low complexity predominate over residues 125-145 (SNVTTSSTPNSNSTSGSATSN). Residues 178–428 (QLLSNPEMMV…LNNPLFAGNP (251 aa)) form an interaction with UBXN4 region. STI1 domains lie at 182–210 (NPEM…QLIM) and 212–251 (NPQM…MQEM). Positions 295 to 371 (PFASLVSNTS…NLVPGVGASM (77 aa)) are disordered. The span at 299–313 (LVSNTSSGEGSQPSR) shows a compositional bias: polar residues. Over residues 327-360 (QTSQSSSASSGTASTVGGTTGSTASGTSGQSTTA) the composition is skewed to low complexity. STI1 domains are found at residues 387–434 (NPQL…QEQM) and 438–470 (LPTF…QQGL). A disordered region spans residues 488–520 (LGALGSTGGSSGTNGSNATPSENTSPTAGTTEP). Gly residues predominate over residues 489 to 499 (GALGSTGGSSG). Residues 509–520 (ENTSPTAGTTEP) show a composition bias toward polar residues. In terms of domain architecture, UBA spans 546–586 (RFQQQLEQPSAMGFLNREANLQALIATGGDINAAIERLLGS).

As to quaternary structure, monomer and homodimer. Heterodimer with UBQLN2. Binds CD47, NBL1, GABRA1, GABRA2, GABRA3, GABRA6, GABRB1, GABRB2 and GABRB3. Binds UBE3A, BTRC, P4HB and MTOR. Interacts with the proteasome 19S subunit. Interacts (via ubiquitin-like domain) with TREX1; the interaction is direct and may control TREX1 subcellular location. Forms a complex with UBXN4 and VCP. Interacts (via UBA domain) with UBQLN4 (via ubiquitin-like domain). Found in a complex with UBQLN2 and MAP1LC3A/B/C. The monomeric form interacts with PSEN1 and PSEN2. Interacts with ORAI1. Interacts (via UBA domain) with TICAM1. Interacts with EPS15. Interacts (via UBA domain) with UBA52 and (via ubiquitin-like domain) with PSMD3 and PSMD4. Interacts with HERPUD1. Interacts with MAP1LC3A/B/C in the presence of UBQLN4. Interacts (via ubiquitin-like domain) with EPS15 (via UIM domains) and both the ubiquitinated and non-ubiquitinated forms can interact with EPS15. Interacts (via ubiquitin-like domain) with EPS15L1, HGS (via UIM domain) and STAM2 (via UIM domain). Interacts with BCL2L10/BCL-B; in the cytoplasm. Degraded during both macroautophagy and during chaperone-mediated autophagy (CMA). In terms of processing, phosphorylated. Post-translationally, ubiquitinated.

The protein localises to the nucleus. It localises to the cytoplasm. The protein resides in the endoplasmic reticulum. It is found in the cytoplasmic vesicle. Its subcellular location is the autophagosome. The protein localises to the cell membrane. Its function is as follows. Plays an important role in the regulation of different protein degradation mechanisms and pathways including ubiquitin-proteasome system (UPS), autophagy and endoplasmic reticulum-associated protein degradation (ERAD) pathway. Mediates the proteasomal targeting of misfolded or accumulated proteins for degradation by binding (via UBA domain) to their polyubiquitin chains and by interacting (via ubiquitin-like domain) with the subunits of the proteasome. Plays a role in the ERAD pathway via its interaction with ER-localized proteins UBXN4, VCP and HERPUD1 and may form a link between the polyubiquitinated ERAD substrates and the proteasome. Plays a role in unfolded protein response (UPR) by attenuating the induction of UPR-inducible genes, DDTI3/CHOP, HSPA5 and PDIA2 during ER stress. Involved in the regulation of macroautophagy and autophagosome formation; required for maturation of autophagy-related protein LC3 from the cytosolic form LC3-I to the membrane-bound form LC3-II and may assist in the maturation of autophagosomes to autolysosomes by mediating autophagosome-lysosome fusion. Negatively regulates the TICAM1/TRIF-dependent toll-like receptor signaling pathway by decreasing the abundance of TICAM1 via the autophagic pathway. Promotes the ubiquitination and lysosomal degradation of ORAI1, consequently down-regulating the ORAI1-mediated Ca2+ mobilization. Suppresses the maturation and proteasomal degradation of amyloid beta A4 protein (A4) by stimulating the lysine 63 (K63)-linked polyubiquitination. Delays the maturation of A4 by sequestering it in the Golgi apparatus and preventing its transport to the cell surface for subsequent processing. Ubiquitinates BCL2L10 and thereby stabilizes protein abundance. This chain is Ubiquilin-1 (UBQLN1), found in Pongo abelii (Sumatran orangutan).